Reading from the N-terminus, the 1020-residue chain is Calcium-transporting ATPase 1 (1020 aa).

Met1 bears the N-acetylmethionine mark. Residues 1 to 162 lie on the Stromal side of the membrane; the sequence is MESYLNENFG…NQFTESPSRG (162 aa). Residues 21 to 32 form an interaction with calmodulin region; sequence ALQRWRKLCWIV. A Phosphoserine; by CPK modification is found at Ser46. A helical transmembrane segment spans residues 163-183; it reads FWLFVWEALQDTTLMILAACA. The Lumenal portion of the chain corresponds to 184-201; the sequence is FVSLIVGILMEGWPIGAH. A helical transmembrane segment spans residues 202–222; sequence DGLGIVASILLVVFVTATSDY. At 223-350 the chain is on the stromal side; the sequence is RQSLQFKDLD…DDETPLQVKL (128 aa). A helical transmembrane segment spans residues 351–370; it reads NGVATIIGKIGLFFAVITFA. The Lumenal segment spans residues 371 to 400; the sequence is VLVQGLANQKRLDNSHWIWTADELMAMLEY. A helical transmembrane segment spans residues 401–418; that stretch reads FAVAVTIVVVAVPEGLPL. The Stromal portion of the chain corresponds to 419–813; that stretch reads AVTLSLAFAM…KWGRSVYINI (395 aa). The active-site 4-aspartylphosphate intermediate is Asp456. 2 residues coordinate Mg(2+): Asp758 and Asp762. Residues 814 to 832 traverse the membrane as a helical segment; it reads QKFVQFQLTVNVVALIVNF. Over 833–843 the chain is Lumenal; sequence LSACLTGNAPL. A helical transmembrane segment spans residues 844–864; it reads TAVQLLWVNMIMDTLGALALA. Over 865–884 the chain is Stromal; sequence TEPPQDDLMKRSPVGRKGNF. A helical transmembrane segment spans residues 885–907; that stretch reads ISNVMWRNILGQSLYQLVIIWCL. Residues 908–919 are Lumenal-facing; sequence QTKGKTMFGLDG. A helical transmembrane segment spans residues 920-941; it reads PDSDLTLNTLIFNIFVFCQVFN. At 942 to 959 the chain is on the stromal side; that stretch reads EISSREMEKIDVFKGILK. A helical transmembrane segment spans residues 960–981; it reads NYVFVAVLTCTVVFQVIIIELL. Residues 982-991 are Lumenal-facing; the sequence is GTFADTTPLN. The chain crosses the membrane as a helical span at residues 992–1013; it reads LGQWLVSIILGFLGMPVAAALK. Residues 1014 to 1020 lie on the Stromal side of the membrane; that stretch reads MIPVGSH.

This sequence belongs to the cation transport ATPase (P-type) (TC 3.A.3) family. Type IIB subfamily. In terms of tissue distribution, expressed at higher levels in roots than in leaves.

The protein localises to the plastid. It localises to the chloroplast inner membrane. It carries out the reaction Ca(2+)(in) + ATP + H2O = Ca(2+)(out) + ADP + phosphate + H(+). Activated by calmodulin. Functionally, this magnesium-dependent enzyme catalyzes the hydrolysis of ATP coupled with the translocation of calcium from the cytosol out of the cell or into organelles. This chain is Calcium-transporting ATPase 1 (ACA1), found in Arabidopsis thaliana (Mouse-ear cress).